A 264-amino-acid chain; its full sequence is MKIALGIQYNGKNYCGWQRQENVASVQEQLEKAISFVANQPCQIFCAGRTDSGVHATGQVVHFETDAIRAEKAWSFGVNANLPDDISVSWAKCVTDDFHARFSATARRYRYILYCNKLRSAILPEGVTHCHLDLDHHLMHQAGQALLGEQDFSSFRAAQCQSHTPFRNVHHLKVVRRGQYIIVDIQANAFVHHMVRNIVGSLIEVGAGHQPVEWIGWLLAQKDRRLAAPTAKPEGLYLVNVSYPTQFQLPQNALGPLFLENELG.

The active-site Nucleophile is the D51. Y109 is a substrate binding site.

Belongs to the tRNA pseudouridine synthase TruA family. In terms of assembly, homodimer.

The catalysed reaction is uridine(38/39/40) in tRNA = pseudouridine(38/39/40) in tRNA. In terms of biological role, formation of pseudouridine at positions 38, 39 and 40 in the anticodon stem and loop of transfer RNAs. This chain is tRNA pseudouridine synthase A, found in Pasteurella multocida (strain Pm70).